The primary structure comprises 518 residues: MDYKQEYLKLKQLLLNQRGSGKMNPLLLNNLSSMVFIVGNNILGDDVKAVIISLIEEFNRIASQDLRHNIELSQYYAVGRGLMTREGTIQCENCELVLKYTHSSVCLSNGRIVRKTSGDNEVNCQVSRGMVKFYIKQKTGDQYRYTRIRIARVQQKGSLAPFTDALYLNNDELDKLHEDTGAAISLSHSDLAKQSASRGDLKVKSPSDVAIATKNINKNVDQINRAATESQLGLMNRSRVVSPVPTQTSVNVANTVARNMSIGDKNSAIMVPNNPISLDSSDDVQPVIGAVDERGIELQHVGNGGPVSQSNTLNSKIPVTSAQIPIDANIAVVPSAGLGTSETITGPSKKSTTSVYNKLSQSVSNAFHTDKAQDKVTDKISKETLKQDETGIASSLGKETKNFFGNLWNKAGDTADKMTNWLRNLGSKSTVVPVSKDLSVVTPLPPQKAGFVPVPTNDDSNTNYLQNKVYTNNPPIDMQYSQNAISTVRNGKTNLSLVEHTQDRQSSTRLNPRYNVMY.

It is found in the virion. This is an uncharacterized protein from Acanthamoeba polyphaga (Amoeba).